The following is a 293-amino-acid chain: GTPase Era (293 aa).

In terms of domain architecture, Era-type G spans 3-170 (KSGFITIIGR…VELMVKYMPE (168 aa)). The tract at residues 11 to 18 (GRPNVGKS) is G1. Position 11 to 18 (11 to 18 (GRPNVGKS)) interacts with GTP. Positions 37–41 (QTTRN) are G2. The segment at 58–61 (DTPG) is G3. GTP contacts are provided by residues 58–62 (DTPGI) and 120–123 (NKID). Residues 120 to 123 (NKID) are G4. Positions 149–151 (ISA) are G5. One can recognise a KH type-2 domain in the interval 201-278 (LSKEVPHGIA…YLEVWVKVKK (78 aa)).

The protein belongs to the TRAFAC class TrmE-Era-EngA-EngB-Septin-like GTPase superfamily. Era GTPase family. In terms of assembly, monomer.

It is found in the cytoplasm. The protein resides in the cell membrane. In terms of biological role, an essential GTPase that binds both GDP and GTP, with rapid nucleotide exchange. Plays a role in 16S rRNA processing and 30S ribosomal subunit biogenesis and possibly also in cell cycle regulation and energy metabolism. The polypeptide is GTPase Era (Clostridium kluyveri (strain NBRC 12016)).